The primary structure comprises 171 residues: ATP synthase subunit b (171 aa).

The chain crosses the membrane as a helical span at residues 24-44 (INLVIVIGVLYWFLKGFLGGI).

It belongs to the ATPase B chain family. As to quaternary structure, F-type ATPases have 2 components, F(1) - the catalytic core - and F(0) - the membrane proton channel. F(1) has five subunits: alpha(3), beta(3), gamma(1), delta(1), epsilon(1). F(0) has four main subunits: a(1), b(1), b'(1) and c(10-14). The alpha and beta chains form an alternating ring which encloses part of the gamma chain. F(1) is attached to F(0) by a central stalk formed by the gamma and epsilon chains, while a peripheral stalk is formed by the delta, b and b' chains.

The protein resides in the cellular thylakoid membrane. Its function is as follows. F(1)F(0) ATP synthase produces ATP from ADP in the presence of a proton or sodium gradient. F-type ATPases consist of two structural domains, F(1) containing the extramembraneous catalytic core and F(0) containing the membrane proton channel, linked together by a central stalk and a peripheral stalk. During catalysis, ATP synthesis in the catalytic domain of F(1) is coupled via a rotary mechanism of the central stalk subunits to proton translocation. Component of the F(0) channel, it forms part of the peripheral stalk, linking F(1) to F(0). This chain is ATP synthase subunit b, found in Synechococcus sp. (strain WH7803).